A 358-amino-acid chain; its full sequence is Mitogen-activated protein kinase 1 (358 aa).

The residue at position 2 (A2) is an N-acetylalanine. The Protein kinase domain maps to 23 to 311 (YTNLSYIGEG…VEQALAHPYL (289 aa)). Position 27 is a phosphoserine; by SGK1 (S27). Residues 29–37 (IGEGAYGMV) and K52 each bind ATP. The active-site Proton acceptor is the D147. T183 is modified (phosphothreonine; by MAP2K1 and MAP2K2). The TXY motif lies at 183 to 185 (TEY). Y185 carries the post-translational modification Phosphotyrosine; by MAP2K1 and MAP2K2. At T188 the chain carries Phosphothreonine; by autocatalysis. S244, S246, and S282 each carry phosphoserine.

It belongs to the protein kinase superfamily. CMGC Ser/Thr protein kinase family. MAP kinase subfamily. In terms of assembly, binds both upstream activators and downstream substrates in multimolecular complexes. This interaction inhibits its tyrosine-kinase activity. Interacts with ADAM15, ARHGEF2, ARRB2, DAPK1 (via death domain), HSF4, IER3, IPO7, NISCH, SGK1, and isoform 1 of NEK2. Interacts (via phosphorylated form) with TPR (via C-terminal region and phosphorylated form); the interaction requires dimerization of MAPK1/ERK2 and increases following EGF stimulation. Interacts with MAP2K1. Interacts with DUSP6. Interacts (phosphorylated form) with CAV2 ('Tyr-19'-phosphorylated form); the interaction, promoted by insulin, leads to nuclear location and MAPK1 activation. Interacts with DCC. Interacts with MORG1. Interacts with PEA15. Interacts with MKNK2. MKNK2 isoform 1 binding prevents from dephosphorylation and inactivation. The phosphorylated form interacts with PML. Interacts with STYX. Interacts with CDK2AP2. Interacts with CAVIN4. Interacts with DUSP7; the interaction enhances DUSP7 phosphatase activity. Interacts with GIT1; this interaction is necessary for MAPK1 localization to focal adhesions. Interacts with ZNF263. Interacts with phosphoglycerate kinase PGK1; the interaction is direct, occurs under hypoxic conditions, and promotes interaction between PGK1 and PIN1. Requires Mg(2+) as cofactor. Post-translationally, dually phosphorylated on Thr-183 and Tyr-185, which activates the enzyme. Ligand-activated ALK induces tyrosine phosphorylation. Dephosphorylated by PTPRJ at Tyr-185. Phosphorylated upon FLT3 and KIT signaling. Dephosphorylated by DUSP1 and DUSP2 at Thr-183 and Tyr-185. ISGylated. In terms of processing, ubiquitinated by TRIM15 via 'Lys-63'-linked ubiquitination; leading to activation. Deubiquitinated by CYLD. Widely expressed.

It localises to the cytoplasm. It is found in the cytoskeleton. The protein localises to the spindle. The protein resides in the nucleus. Its subcellular location is the microtubule organizing center. It localises to the centrosome. It is found in the membrane. The protein localises to the caveola. The protein resides in the cell junction. Its subcellular location is the focal adhesion. The enzyme catalyses L-seryl-[protein] + ATP = O-phospho-L-seryl-[protein] + ADP + H(+). It carries out the reaction L-threonyl-[protein] + ATP = O-phospho-L-threonyl-[protein] + ADP + H(+). Its activity is regulated as follows. Phosphorylated by MAP2K1/MEK1 and MAP2K2/MEK2 on Thr-183 and Tyr-185 in response to external stimuli like insulin or NGF. Both phosphorylations are required for activity. This phosphorylation causes dramatic conformational changes, which enable full activation and interaction of MAPK1/ERK2 with its substrates. Phosphorylation on Ser-27 by SGK1 results in its activation by enhancing its interaction with MAP2K1/MEK1 and MAP2K2/MEK2. Dephosphorylated and inactivated by DUSP1, DUSP3, DUSP6 and DUSP9. Inactivated by pyrimidylpyrrole inhibitors. Its function is as follows. Serine/threonine kinase which acts as an essential component of the MAP kinase signal transduction pathway. MAPK1/ERK2 and MAPK3/ERK1 are the 2 MAPKs which play an important role in the MAPK/ERK cascade. They participate also in a signaling cascade initiated by activated KIT and KITLG/SCF. Depending on the cellular context, the MAPK/ERK cascade mediates diverse biological functions such as cell growth, adhesion, survival and differentiation through the regulation of transcription, translation, cytoskeletal rearrangements. The MAPK/ERK cascade also plays a role in initiation and regulation of meiosis, mitosis, and postmitotic functions in differentiated cells by phosphorylating a number of transcription factors. About 160 substrates have already been discovered for ERKs. Many of these substrates are localized in the nucleus, and seem to participate in the regulation of transcription upon stimulation. However, other substrates are found in the cytosol as well as in other cellular organelles, and those are responsible for processes such as translation, mitosis and apoptosis. Moreover, the MAPK/ERK cascade is also involved in the regulation of the endosomal dynamics, including lysosome processing and endosome cycling through the perinuclear recycling compartment (PNRC); as well as in the fragmentation of the Golgi apparatus during mitosis. The substrates include transcription factors (such as ATF2, BCL6, ELK1, ERF, FOS, HSF4 or SPZ1), cytoskeletal elements (such as CANX, CTTN, GJA1, MAP2, MAPT, PXN, SORBS3 or STMN1), regulators of apoptosis (such as BAD, BTG2, CASP9, DAPK1, IER3, MCL1 or PPARG), regulators of translation (such as EIF4EBP1 and FXR1) and a variety of other signaling-related molecules (like ARHGEF2, DCC, FRS2 or GRB10). Protein kinases (such as RAF1, RPS6KA1/RSK1, RPS6KA3/RSK2, RPS6KA2/RSK3, RPS6KA6/RSK4, SYK, MKNK1/MNK1, MKNK2/MNK2, RPS6KA5/MSK1, RPS6KA4/MSK2, MAPKAPK3 or MAPKAPK5) and phosphatases (such as DUSP1, DUSP4, DUSP6 or DUSP16) are other substrates which enable the propagation the MAPK/ERK signal to additional cytosolic and nuclear targets, thereby extending the specificity of the cascade. Mediates phosphorylation of TPR in response to EGF stimulation. May play a role in the spindle assembly checkpoint. Phosphorylates PML and promotes its interaction with PIN1, leading to PML degradation. Phosphorylates CDK2AP2. Phosphorylates phosphoglycerate kinase PGK1 under hypoxic conditions to promote its targeting to the mitochondrion and suppress the formation of acetyl-coenzyme A from pyruvate. In terms of biological role, acts as a transcriptional repressor. Binds to a [GC]AAA[GC] consensus sequence. Repress the expression of interferon gamma-induced genes. Seems to bind to the promoter of CCL5, DMP1, IFIH1, IFITM1, IRF7, IRF9, LAMP3, OAS1, OAS2, OAS3 and STAT1. Transcriptional activity is independent of kinase activity. The sequence is that of Mitogen-activated protein kinase 1 from Mus musculus (Mouse).